The chain runs to 592 residues: A-type ATP synthase subunit A (592 aa).

233-240 (GPFGSGKT) is a binding site for ATP.

Belongs to the ATPase alpha/beta chains family. Has multiple subunits with at least A(3), B(3), C, D, E, F, H, I and proteolipid K(x).

The protein resides in the cell membrane. The enzyme catalyses ATP + H2O + 4 H(+)(in) = ADP + phosphate + 5 H(+)(out). Its function is as follows. Component of the A-type ATP synthase that produces ATP from ADP in the presence of a proton gradient across the membrane. The A chain is the catalytic subunit. The chain is A-type ATP synthase subunit A from Saccharolobus solfataricus (strain ATCC 35092 / DSM 1617 / JCM 11322 / P2) (Sulfolobus solfataricus).